The primary structure comprises 216 residues: Uracil phosphoribosyltransferase (216 aa).

Residues Arg85, Arg110, and 135 to 143 (DPMVATGYS) each bind 5-phospho-alpha-D-ribose 1-diphosphate. Residues Ile200 and 205 to 207 (GDA) contribute to the uracil site. A 5-phospho-alpha-D-ribose 1-diphosphate-binding site is contributed by Asp206.

It belongs to the UPRTase family. Mg(2+) is required as a cofactor.

The enzyme catalyses UMP + diphosphate = 5-phospho-alpha-D-ribose 1-diphosphate + uracil. The protein operates within pyrimidine metabolism; UMP biosynthesis via salvage pathway; UMP from uracil: step 1/1. Allosterically activated by GTP. Its function is as follows. Catalyzes the conversion of uracil and 5-phospho-alpha-D-ribose 1-diphosphate (PRPP) to UMP and diphosphate. In Paraburkholderia phytofirmans (strain DSM 17436 / LMG 22146 / PsJN) (Burkholderia phytofirmans), this protein is Uracil phosphoribosyltransferase.